Here is an 88-residue protein sequence, read N- to C-terminus: Small ribosomal subunit protein bS20 (88 aa).

The tract at residues 1–27 (MANIKSQIKRNKTNEKARLRNKAVKSS) is disordered.

Belongs to the bacterial ribosomal protein bS20 family.

In terms of biological role, binds directly to 16S ribosomal RNA. The chain is Small ribosomal subunit protein bS20 from Streptomyces griseus subsp. griseus (strain JCM 4626 / CBS 651.72 / NBRC 13350 / KCC S-0626 / ISP 5235).